The chain runs to 312 residues: MNHIFKHIPVMKKELIDSLKIKKNGIYIDSTFGTGGHSNEILKKLGQNGRLYSIDRDPIAFSIGSEIKDSRFHIINENFSKLLDFAKNEKIIGKVNGIIFDLGVSSIQIDDYRRGFSFKNDGPLDMRMNPNYGISASEWLFESNVKEISFVLKNFGEERFSRKIAYAIKRRSQIKKITSTLELANIIKKTIPTKNKFKHPARRSFQAIRIYINQELEEIQKALESTLKILKPGGRISIISFHSLEDRLVKKFMIKNSTKAIIPYGMPITEEQLNRLTTCKLKIINRILPTQNEINNNPRARSSVLRIAEIQE.

S-adenosyl-L-methionine is bound by residues 35-37 (GGH), Asp55, Phe79, Asp101, and Gln108.

This sequence belongs to the methyltransferase superfamily. RsmH family.

It localises to the cytoplasm. It catalyses the reaction cytidine(1402) in 16S rRNA + S-adenosyl-L-methionine = N(4)-methylcytidine(1402) in 16S rRNA + S-adenosyl-L-homocysteine + H(+). Its function is as follows. Specifically methylates the N4 position of cytidine in position 1402 (C1402) of 16S rRNA. In Buchnera aphidicola subsp. Acyrthosiphon pisum (strain APS) (Acyrthosiphon pisum symbiotic bacterium), this protein is Ribosomal RNA small subunit methyltransferase H.